A 976-amino-acid chain; its full sequence is Leucine--tRNA ligase (976 aa).

Positions 1–23 are enriched in low complexity; the sequence is MTESPTTTPGSTSGAPSGVPSGV. The tract at residues 1-34 is disordered; sequence MTESPTTTPGSTSGAPSGVPSGVNDAESDAPRHR. The 'HIGH' region motif lies at 86–97; sequence PYPSGEGLHVGH. The short motif at 745-749 is the 'KMSKS' region element; that stretch reads KIGKS. K748 is a binding site for ATP.

Belongs to the class-I aminoacyl-tRNA synthetase family.

The protein localises to the cytoplasm. It carries out the reaction tRNA(Leu) + L-leucine + ATP = L-leucyl-tRNA(Leu) + AMP + diphosphate. In Mycobacterium ulcerans (strain Agy99), this protein is Leucine--tRNA ligase.